A 352-amino-acid polypeptide reads, in one-letter code: Phenylalanine--tRNA ligase alpha subunit (352 aa).

E258 is a binding site for Mg(2+).

Belongs to the class-II aminoacyl-tRNA synthetase family. Phe-tRNA synthetase alpha subunit type 1 subfamily. Tetramer of two alpha and two beta subunits. The cofactor is Mg(2+).

It localises to the cytoplasm. The catalysed reaction is tRNA(Phe) + L-phenylalanine + ATP = L-phenylalanyl-tRNA(Phe) + AMP + diphosphate + H(+). This Staphylococcus carnosus (strain TM300) protein is Phenylalanine--tRNA ligase alpha subunit.